Here is a 338-residue protein sequence, read N- to C-terminus: Aspartate-semialdehyde dehydrogenase (338 aa).

Residues 13–16 and 41–42 contribute to the NADP(+) site; these read SGAV and RS. R101 serves as a coordination point for phosphate. The active-site Acyl-thioester intermediate is C132. A substrate-binding site is contributed by Q159. Position 162-163 (162-163) interacts with NADP(+); the sequence is SG. K216 lines the phosphate pocket. Substrate is bound at residue R238. The active-site Proton acceptor is the H245. N317 contributes to the NADP(+) binding site.

This sequence belongs to the aspartate-semialdehyde dehydrogenase family. Homodimer.

It catalyses the reaction L-aspartate 4-semialdehyde + phosphate + NADP(+) = 4-phospho-L-aspartate + NADPH + H(+). The protein operates within amino-acid biosynthesis; L-lysine biosynthesis via DAP pathway; (S)-tetrahydrodipicolinate from L-aspartate: step 2/4. It participates in amino-acid biosynthesis; L-methionine biosynthesis via de novo pathway; L-homoserine from L-aspartate: step 2/3. It functions in the pathway amino-acid biosynthesis; L-threonine biosynthesis; L-threonine from L-aspartate: step 2/5. In terms of biological role, catalyzes the NADPH-dependent formation of L-aspartate-semialdehyde (L-ASA) by the reductive dephosphorylation of L-aspartyl-4-phosphate. This Shewanella violacea (strain JCM 10179 / CIP 106290 / LMG 19151 / DSS12) protein is Aspartate-semialdehyde dehydrogenase.